We begin with the raw amino-acid sequence, 401 residues long: Mannan endo-1,4-beta-mannosidase 3 (401 aa).

The N-terminal stretch at 1–24 is a signal peptide; it reads MSYTHRRSCISGLFLLLLALSCEA. 2 residues coordinate substrate: Trp84 and Asn198. Glu199 acts as the Proton donor in catalysis. Tyr277 is a binding site for substrate. Glu317 acts as the Nucleophile in catalysis. Trp356 is a substrate binding site.

The protein belongs to the glycosyl hydrolase 5 (cellulase A) family.

Its subcellular location is the secreted. The catalysed reaction is Random hydrolysis of (1-&gt;4)-beta-D-mannosidic linkages in mannans, galactomannans and glucomannans.. This is Mannan endo-1,4-beta-mannosidase 3 (MAN3) from Solanum lycopersicum (Tomato).